Here is a 2013-residue protein sequence, read N- to C-terminus: Cell adhesion molecule DSCAM (2013 aa).

A signal peptide spans 1–17 (MWILALSLFQSFANVFS). Over 18–1594 (EEPHSSLYFV…EGLTTNEGLK (1577 aa)) the chain is Extracellular. Ig-like C2-type domains are found at residues 20–119 (PHSS…VHIK), 125–216 (PYTV…ARLF), 225–305 (PSIL…AKVI), 313–401 (PLKA…VQVV), 407–500 (PKII…ARIN), 504–592 (PASI…VHVT), 596–685 (PPFI…SQLI), 690–783 (PKFV…MYLT), and 787–883 (PAMI…LTVQ). 9 cysteine pairs are disulfide-bonded: cysteine 46–cysteine 102, cysteine 145–cysteine 197, cysteine 246–cysteine 293, cysteine 335–cysteine 385, cysteine 428–cysteine 484, cysteine 525–cysteine 575, cysteine 617–cysteine 669, cysteine 711–cysteine 766, and cysteine 809–cysteine 865. Asparagine 78 is a glycosylation site (N-linked (GlcNAc...) asparagine). N-linked (GlcNAc...) asparagine glycosylation occurs at asparagine 470. Asparagine 666 carries N-linked (GlcNAc...) asparagine glycosylation. 4 Fibronectin type-III domains span residues 885–982 (PPDP…ADEA), 987–1086 (PPQE…TLED), 1091–1187 (PPEN…TKED), and 1191–1285 (PPAG…AKAP). Residues asparagine 1160 and asparagine 1250 are each glycosylated (N-linked (GlcNAc...) asparagine). Residues 1285–1377 (PARILTFSGT…DEIILNLQVQ (93 aa)) form the Ig-like C2-type 10 domain. Cysteine 1307 and cysteine 1359 form a disulfide bridge. 2 Fibronectin type-III domains span residues 1379-1473 (PPDQ…TLGK) and 1474-1575 (EPQF…TIPP). Residues 1595 to 1615 (ILVTISCILVGVLLLFVLLLV) form a helical membrane-spanning segment. Over 1616–2013 (VRRRRREQRL…NPYAKSYTLV (398 aa)) the chain is Cytoplasmic. The segment at 1616–2013 (VRRRRREQRL…NPYAKSYTLV (398 aa)) is required for netrin-mediated axon repulsion of neuronal growth cones. Disordered regions lie at residues 1718-1809 (LVDV…SASS) and 1920-2013 (RDLS…YTLV). The segment covering 1799 to 1809 (SSMVSTESASS) has biased composition (low complexity). A compositionally biased stretch (polar residues) spans 1949–1968 (EASSSTSSTREGQQSWQQGA).

As to quaternary structure, homodimer; mediates homophilic interactions to promote cell adhesion. Interacts with DCC; the interaction is abolished in response to NTN1. Interacts (via extracellular domain) with NTN1. Interacts (via extracellular domain) with UNC5C (via Ig-like C2-type domain). Interacts with PTK2. Interacts with FYN. Post-translationally, phosphorylated at tyrosine residues. Phosphorylation is enhanced by NTN1. Expressed in cortical and cerebellar neurons, in cells of the external and internal granular layer and of the Purkinje cell layer (at protein level). In the retina, expressed in dopaminergic and Nos1-positive amacrine cells and most retinal ganglion cells (at protein level). Expressed in the brain with highest levels in the cortex, olfactory bulb, hippocampus, thalamus, cerebellum and spinal cord. Expressed in the retinal ganglion layer (RGL).

The protein localises to the cell membrane. It is found in the cell projection. Its subcellular location is the axon. It localises to the synapse. The protein resides in the dendrite. The protein localises to the growth cone. Cell adhesion molecule that plays a role in neuronal self-avoidance. Promotes repulsion between specific neuronal processes of either the same cell or the same subtype of cells. Mediates within retinal amacrine and ganglion cell subtypes both isoneuronal self-avoidance for creating an orderly dendritic arborization and heteroneuronal self-avoidance to maintain the mosaic spacing between amacrine and ganglion cell bodies. Receptor for netrin required for axon guidance independently of and in collaboration with the receptor DCC. Might also collaborate with UNC5C in NTN1-mediated axon repulsion independently of DCC. In spinal cord development plays a role in guiding commissural axons projection and pathfinding across the ventral midline to reach the floor plate upon ligand binding. Mediates intracellular signaling by stimulating the activation of MAPK8 and MAP kinase p38. Adhesion molecule that promotes lamina-specific synaptic connections in the retina: expressed in specific subsets of interneurons and retinal ganglion cells (RGCs) and promotes synaptic connectivity via homophilic interactions. This chain is Cell adhesion molecule DSCAM (Dscam), found in Mus musculus (Mouse).